Consider the following 288-residue polypeptide: Light-independent protochlorophyllide reductase iron-sulfur ATP-binding protein (288 aa).

Residues 10–15 and Lys-39 each bind ATP; that span reads GIGKST. Ser-14 is a binding site for Mg(2+). The [4Fe-4S] cluster site is built by Cys-95 and Cys-129. Residues 180–181 and 204–206 each bind ATP; these read NR and PLL.

This sequence belongs to the NifH/BchL/ChlL family. As to quaternary structure, homodimer. Protochlorophyllide reductase is composed of three subunits; ChlL, ChlN and ChlB. Requires [4Fe-4S] cluster as cofactor.

The protein resides in the plastid. It is found in the chloroplast. It carries out the reaction chlorophyllide a + oxidized 2[4Fe-4S]-[ferredoxin] + 2 ADP + 2 phosphate = protochlorophyllide a + reduced 2[4Fe-4S]-[ferredoxin] + 2 ATP + 2 H2O. It participates in porphyrin-containing compound metabolism; chlorophyll biosynthesis (light-independent). Component of the dark-operative protochlorophyllide reductase (DPOR) that uses Mg-ATP and reduced ferredoxin to reduce ring D of protochlorophyllide (Pchlide) to form chlorophyllide a (Chlide). This reaction is light-independent. The L component serves as a unique electron donor to the NB-component of the complex, and binds Mg-ATP. The polypeptide is Light-independent protochlorophyllide reductase iron-sulfur ATP-binding protein (Stigeoclonium helveticum (Green alga)).